Here is a 255-residue protein sequence, read N- to C-terminus: Ribonuclease HII (255 aa).

The 186-residue stretch at 70–255 (EYIAGVDEVG…FEPVKKILLK (186 aa)) folds into the RNase H type-2 domain. Residues Asp76, Glu77, and Asp168 each contribute to the a divalent metal cation site.

Belongs to the RNase HII family. Mn(2+) is required as a cofactor. Mg(2+) serves as cofactor.

The protein localises to the cytoplasm. The enzyme catalyses Endonucleolytic cleavage to 5'-phosphomonoester.. Its function is as follows. Endonuclease that specifically degrades the RNA of RNA-DNA hybrids. This chain is Ribonuclease HII, found in Ligilactobacillus salivarius (strain UCC118) (Lactobacillus salivarius).